The chain runs to 195 residues: dTTP/UTP pyrophosphatase (195 aa).

Catalysis depends on aspartate 70, which acts as the Proton acceptor.

This sequence belongs to the Maf family. YhdE subfamily. Requires a divalent metal cation as cofactor.

The protein localises to the cytoplasm. It carries out the reaction dTTP + H2O = dTMP + diphosphate + H(+). The enzyme catalyses UTP + H2O = UMP + diphosphate + H(+). Functionally, nucleoside triphosphate pyrophosphatase that hydrolyzes dTTP and UTP. May have a dual role in cell division arrest and in preventing the incorporation of modified nucleotides into cellular nucleic acids. This chain is dTTP/UTP pyrophosphatase, found in Photorhabdus laumondii subsp. laumondii (strain DSM 15139 / CIP 105565 / TT01) (Photorhabdus luminescens subsp. laumondii).